The primary structure comprises 519 residues: uncharacterized protein (519 aa).

The next 11 helical transmembrane spans lie at 52 to 72, 86 to 106, 119 to 139, 156 to 176, 199 to 219, 231 to 251, 313 to 333, 343 to 363, 374 to 394, 408 to 430, and 477 to 497; these read IYFLILLYLIQGVPMGLVRGS, LATYSLAAYPYSLKVLWSPIV, TWVVPCMLLISSTLLLFSYNV, WSFLLVFVCATQDIAVDGWSL, FFLSFTILLVFTSPEFANTFI, LSGYIKFWAYFTFIASVLVCF, MLSLIILINFPLGLALGVYTG, IWLKGYWGRVVSILLNTILVY, VFFPIFLCYTLNASFSTIQFV, IGGTYMTILNTLSNLGGSWPQYV, and TSIVGIFLAISICVSLITPVV.

The protein resides in the membrane. This is an uncharacterized protein from Schizosaccharomyces pombe (strain 972 / ATCC 24843) (Fission yeast).